A 103-amino-acid polypeptide reads, in one-letter code: Small ribosomal subunit protein uS10 (103 aa).

It belongs to the universal ribosomal protein uS10 family. As to quaternary structure, part of the 30S ribosomal subunit.

Its function is as follows. Involved in the binding of tRNA to the ribosomes. This is Small ribosomal subunit protein uS10 from Vibrio campbellii (strain ATCC BAA-1116).